The sequence spans 263 residues: Glutamate racemase (263 aa).

Residues 10 to 11 and 42 to 43 contribute to the substrate site; these read DS and YG. Cys73 functions as the Proton donor/acceptor in the catalytic mechanism. 74–75 lines the substrate pocket; the sequence is NS. The active-site Proton donor/acceptor is Cys183. Residue 184–185 coordinates substrate; the sequence is TH.

This sequence belongs to the aspartate/glutamate racemases family.

The enzyme catalyses L-glutamate = D-glutamate. Its pathway is cell wall biogenesis; peptidoglycan biosynthesis. Functionally, provides the (R)-glutamate required for cell wall biosynthesis. This is Glutamate racemase from Acidothermus cellulolyticus (strain ATCC 43068 / DSM 8971 / 11B).